The following is a 108-amino-acid chain: Large ribosomal subunit protein uL24 (108 aa).

Belongs to the universal ribosomal protein uL24 family. Part of the 50S ribosomal subunit.

In terms of biological role, one of two assembly initiator proteins, it binds directly to the 5'-end of the 23S rRNA, where it nucleates assembly of the 50S subunit. Functionally, one of the proteins that surrounds the polypeptide exit tunnel on the outside of the subunit. The chain is Large ribosomal subunit protein uL24 from Mycoplasma genitalium (strain ATCC 33530 / DSM 19775 / NCTC 10195 / G37) (Mycoplasmoides genitalium).